The primary structure comprises 283 residues: Protease HtpX (283 aa).

2 consecutive transmembrane segments (helical) span residues 4-24 (IALFLATNFAVMIVLGIILSV) and 33-53 (GGILIMSVLFGFAGSLISLFM). Histidine 139 contacts Zn(2+). Glutamate 140 is a catalytic residue. Zn(2+) is bound at residue histidine 143. Helical transmembrane passes span 147-167 (GDMVTMTLLQGVLNTFVIFLS) and 192-212 (FLVSMVLEILFGVLATIIAMW). Glutamate 218 lines the Zn(2+) pocket.

The protein belongs to the peptidase M48B family. It depends on Zn(2+) as a cofactor.

The protein resides in the cell inner membrane. The polypeptide is Protease HtpX (Glaesserella parasuis serovar 5 (strain SH0165) (Haemophilus parasuis)).